The following is a 119-amino-acid chain: Large ribosomal subunit protein bL12 (119 aa).

The protein belongs to the bacterial ribosomal protein bL12 family. Homodimer. Part of the ribosomal stalk of the 50S ribosomal subunit. Forms a multimeric L10(L12)X complex, where L10 forms an elongated spine to which 2 to 4 L12 dimers bind in a sequential fashion. Binds GTP-bound translation factors.

Its function is as follows. Forms part of the ribosomal stalk which helps the ribosome interact with GTP-bound translation factors. Is thus essential for accurate translation. The protein is Large ribosomal subunit protein bL12 of Bacillus cytotoxicus (strain DSM 22905 / CIP 110041 / 391-98 / NVH 391-98).